Consider the following 249-residue polypeptide: Phosphoribosylaminoimidazole-succinocarboxamide synthase (249 aa).

It belongs to the SAICAR synthetase family.

The enzyme catalyses 5-amino-1-(5-phospho-D-ribosyl)imidazole-4-carboxylate + L-aspartate + ATP = (2S)-2-[5-amino-1-(5-phospho-beta-D-ribosyl)imidazole-4-carboxamido]succinate + ADP + phosphate + 2 H(+). The protein operates within purine metabolism; IMP biosynthesis via de novo pathway; 5-amino-1-(5-phospho-D-ribosyl)imidazole-4-carboxamide from 5-amino-1-(5-phospho-D-ribosyl)imidazole-4-carboxylate: step 1/2. The chain is Phosphoribosylaminoimidazole-succinocarboxamide synthase from Chloroflexus aurantiacus (strain ATCC 29366 / DSM 635 / J-10-fl).